Here is a 169-residue protein sequence, read N- to C-terminus: Photosystem I assembly protein Ycf3 (169 aa).

TPR repeat units follow at residues Ala35–Pro68, Ser72–Leu105, and Gly120–Asn153.

Belongs to the Ycf3 family.

The protein localises to the plastid. Its subcellular location is the chloroplast thylakoid membrane. In terms of biological role, essential for the assembly of the photosystem I (PSI) complex. May act as a chaperone-like factor to guide the assembly of the PSI subunits. The sequence is that of Photosystem I assembly protein Ycf3 from Pinus koraiensis (Korean pine).